Here is a 298-residue protein sequence, read N- to C-terminus: Lysozyme-like protein 1 (298 aa).

Residues 1-16 form the signal peptide; sequence MLKLAFVTFLFALASA. Residues 59–277 enclose the Ch-type lysozyme domain; that stretch reads YAYAVDISVP…AAASSKNTDF (219 aa).

Belongs to the glycosyl hydrolase 25 family. In terms of tissue distribution, expressed in intestine, IL2 and IL6 neurons and some neurons in the head ganglia.

Its subcellular location is the cytoplasmic vesicle lumen. Its function is as follows. Involved in resistance to Gram-negative bacterium S.marcescens and to bacterium Gram-positive S.aureus infection. This chain is Lysozyme-like protein 1, found in Caenorhabditis elegans.